The chain runs to 90 residues: Small ribosomal subunit protein uS19 (90 aa).

It belongs to the universal ribosomal protein uS19 family.

Protein S19 forms a complex with S13 that binds strongly to the 16S ribosomal RNA. This is Small ribosomal subunit protein uS19 from Mesomycoplasma hyopneumoniae (strain 232) (Mycoplasma hyopneumoniae).